Consider the following 441-residue polypeptide: Ribulose bisphosphate carboxylase large chain (441 aa).

Substrate-binding residues include Asn-89 and Thr-139. Catalysis depends on Lys-141, which acts as the Proton acceptor. Lys-143 lines the substrate pocket. 3 residues coordinate Mg(2+): Lys-167, Asp-169, and Glu-170. Residue Lys-167 is modified to N6-carboxylysine. The active-site Proton acceptor is His-260. Xaa-261, His-293, and Ser-345 together coordinate substrate.

It belongs to the RuBisCO large chain family. Type I subfamily. In terms of assembly, heterohexadecamer of 8 large chains and 8 small chains; disulfide-linked. The disulfide link is formed within the large subunit homodimers. The cofactor is Mg(2+). The disulfide bond which can form in the large chain dimeric partners within the hexadecamer appears to be associated with oxidative stress and protein turnover.

The protein resides in the plastid. Its subcellular location is the chloroplast. It catalyses the reaction 2 (2R)-3-phosphoglycerate + 2 H(+) = D-ribulose 1,5-bisphosphate + CO2 + H2O. It carries out the reaction D-ribulose 1,5-bisphosphate + O2 = 2-phosphoglycolate + (2R)-3-phosphoglycerate + 2 H(+). Its function is as follows. RuBisCO catalyzes two reactions: the carboxylation of D-ribulose 1,5-bisphosphate, the primary event in carbon dioxide fixation, as well as the oxidative fragmentation of the pentose substrate in the photorespiration process. Both reactions occur simultaneously and in competition at the same active site. The polypeptide is Ribulose bisphosphate carboxylase large chain (Apocynum cannabinum (Hemp dogbane)).